We begin with the raw amino-acid sequence, 1109 residues long: Pesticidal crystal protein Cry28Aa (1109 aa).

Belongs to the delta endotoxin family.

In terms of biological role, promotes colloidosmotic lysis by binding to the midgut epithelial cells of insects. The protein is Pesticidal crystal protein Cry28Aa (cry28Aa) of Bacillus thuringiensis subsp. finitimus.